Reading from the N-terminus, the 592-residue chain is Aspartate--tRNA(Asp/Asn) ligase (592 aa).

Position 175 (E175) interacts with L-aspartate. Residues 199 to 202 (QQFK) are aspartate. 2 residues coordinate L-aspartate: R221 and H451. Residue 221-223 (RDE) participates in ATP binding. E485 provides a ligand contact to ATP. R492 contributes to the L-aspartate binding site. 537 to 540 (GIDR) serves as a coordination point for ATP.

Belongs to the class-II aminoacyl-tRNA synthetase family. Type 1 subfamily. As to quaternary structure, homodimer.

The protein localises to the cytoplasm. The catalysed reaction is tRNA(Asx) + L-aspartate + ATP = L-aspartyl-tRNA(Asx) + AMP + diphosphate. In terms of biological role, aspartyl-tRNA synthetase with relaxed tRNA specificity since it is able to aspartylate not only its cognate tRNA(Asp) but also tRNA(Asn). Reaction proceeds in two steps: L-aspartate is first activated by ATP to form Asp-AMP and then transferred to the acceptor end of tRNA(Asp/Asn). The polypeptide is Aspartate--tRNA(Asp/Asn) ligase (Phenylobacterium zucineum (strain HLK1)).